The sequence spans 633 residues: Kinesin-like motor protein 9 (633 aa).

The Kinesin motor domain occupies Met-1–Ile-392. ATP is bound at residue Gly-94–Thr-101. 3 disordered regions span residues Leu-393–Leu-423, Leu-531–Leu-556, and Lys-575–Leu-633. The span at Asn-398–Leu-423 shows a compositional bias: polar residues. A coiled-coil region spans residues Thr-417–Ala-541. The span at Pro-578–Asn-587 shows a compositional bias: polar residues. The segment covering Val-604–Ser-623 has biased composition (low complexity). Ser-605, Ser-611, and Ser-613 each carry phosphoserine. Polar residues predominate over residues Gly-624–Leu-633.

This sequence belongs to the TRAFAC class myosin-kinesin ATPase superfamily. Kinesin family. In terms of assembly, interacts with ase1. Post-translationally, phosphorylated by cdc2 and dephosphorylated by clp1. Dephosphorylation is required for the interaction with ase1.

It is found in the nucleus. Its subcellular location is the cytoplasm. The protein localises to the cytoskeleton. The protein resides in the microtubule organizing center. It localises to the spindle pole body. Its function is as follows. Kinesin-like motor protein involved in anaphase B spindle elongation. In Schizosaccharomyces pombe (strain 972 / ATCC 24843) (Fission yeast), this protein is Kinesin-like motor protein 9 (klp9).